The primary structure comprises 835 residues: Ribonuclease R (835 aa).

The 327-residue stretch at 267–593 (RVDLRELPLV…LLHRAIKYLI (327 aa)) folds into the RNB domain. An S1 motif domain is found at 652–733 (GDELEGVIAN…DDKQIDFELV (82 aa)). The segment covering 739–754 (LRGEGKTAKKRAAEAK) has biased composition (basic and acidic residues). The disordered stretch occupies residues 739 to 835 (LRGEGKTAKK…KTKRTKQDAQ (97 aa)). Basic residues predominate over residues 755-764 (RKAKEKKRAA). A compositionally biased stretch (low complexity) spans 765-777 (TRSSSKESATARA). The segment covering 783-793 (PTKRPEQTDSG) has biased composition (basic and acidic residues). Over residues 809-829 (KPKVKKAHKKKPHSKPKKTKR) the composition is skewed to basic residues.

This sequence belongs to the RNR ribonuclease family. RNase R subfamily.

The protein localises to the cytoplasm. It catalyses the reaction Exonucleolytic cleavage in the 3'- to 5'-direction to yield nucleoside 5'-phosphates.. In terms of biological role, 3'-5' exoribonuclease that releases 5'-nucleoside monophosphates and is involved in maturation of structured RNAs. This chain is Ribonuclease R, found in Vibrio parahaemolyticus serotype O3:K6 (strain RIMD 2210633).